Here is a 72-residue protein sequence, read N- to C-terminus: Bowman-Birk type proteinase inhibitor (72 aa).

7 disulfides stabilise this stretch: cysteine 8/cysteine 61, cysteine 9/cysteine 24, cysteine 12/cysteine 57, cysteine 14/cysteine 22, cysteine 31/cysteine 38, cysteine 35/cysteine 50, and cysteine 40/cysteine 48.

This sequence belongs to the Bowman-Birk serine protease inhibitor family.

Functionally, this inhibitor has two domains, each with separate antiprotease activity. 1 mole of inhibitor inhibits either 1 mole of trypsin or 2 moles of chymotrypsin, stoichiometrically. The chain is Bowman-Birk type proteinase inhibitor from Vicia sativa subsp. nigra (Common vetch).